A 161-amino-acid polypeptide reads, in one-letter code: Eukaryotic translation initiation factor 5A-2 (161 aa).

Lys54 carries the hypusine modification.

It belongs to the eIF-5A family. Lys-54 undergoes hypusination, a unique post-translational modification that consists in the addition of a butylamino group from spermidine to lysine side chain and leads to the formation of a hypusine residue. eIF-5As are the only known proteins to undergo this modification, which is essential for their function. As to expression, expressed in the somatic tissues.

It localises to the cytoplasm. Functionally, translation factor that promotes translation elongation and termination, particularly upon ribosome stalling at specific amino acid sequence contexts. Binds between the exit (E) and peptidyl (P) site of the ribosome and promotes rescue of stalled ribosome: specifically required for efficient translation of polyproline-containing peptides as well as other motifs that stall the ribosome. Acts as a ribosome quality control (RQC) cofactor by joining the RQC complex to facilitate peptidyl transfer during CAT tailing step. Acts in somatic tissues and its function in the soma is essential for normal growth and reproduction. The polypeptide is Eukaryotic translation initiation factor 5A-2 (iff-2) (Caenorhabditis elegans).